We begin with the raw amino-acid sequence, 667 residues long: tRNA 5-methylaminomethyl-2-thiouridine biosynthesis bifunctional protein MnmC (667 aa).

Over residues methionine 1–isoleucine 12 the composition is skewed to polar residues. The disordered stretch occupies residues methionine 1–histidine 20. The tract at residues methionine 1 to glutamate 240 is tRNA (mnm(5)s(2)U34)-methyltransferase. The tract at residues isoleucine 268 to leucine 667 is FAD-dependent cmnm(5)s(2)U34 oxidoreductase.

This sequence in the N-terminal section; belongs to the methyltransferase superfamily. tRNA (mnm(5)s(2)U34)-methyltransferase family. It in the C-terminal section; belongs to the DAO family. FAD serves as cofactor.

It is found in the cytoplasm. It catalyses the reaction 5-aminomethyl-2-thiouridine(34) in tRNA + S-adenosyl-L-methionine = 5-methylaminomethyl-2-thiouridine(34) in tRNA + S-adenosyl-L-homocysteine + H(+). Catalyzes the last two steps in the biosynthesis of 5-methylaminomethyl-2-thiouridine (mnm(5)s(2)U) at the wobble position (U34) in tRNA. Catalyzes the FAD-dependent demodification of cmnm(5)s(2)U34 to nm(5)s(2)U34, followed by the transfer of a methyl group from S-adenosyl-L-methionine to nm(5)s(2)U34, to form mnm(5)s(2)U34. The chain is tRNA 5-methylaminomethyl-2-thiouridine biosynthesis bifunctional protein MnmC from Magnetococcus marinus (strain ATCC BAA-1437 / JCM 17883 / MC-1).